The following is a 299-amino-acid chain: uncharacterized protein (299 aa).

6 consecutive transmembrane segments (helical) span residues 32–52, 56–76, 199–219, 220–240, 246–266, and 273–293; these read FILL…YLHL, SMII…SILY, LAIG…LLGA, YLIA…VKPE, FEIV…PIFG, and FLIS…ILKF.

It localises to the cell membrane. This is an uncharacterized protein from Methanocaldococcus jannaschii (strain ATCC 43067 / DSM 2661 / JAL-1 / JCM 10045 / NBRC 100440) (Methanococcus jannaschii).